We begin with the raw amino-acid sequence, 185 residues long: Translocon-associated protein subunit gamma (185 aa).

Met-1 is subject to N-acetylmethionine. Residues 1-27 (MAPKGSCKQQSEEDLLLQDFSRNLSAK) lie on the Lumenal side of the membrane. Ser-11 is subject to Phosphoserine. The helical transmembrane segment at 28–48 (SSALFFGNAFIVSAIPIWLYW) threads the bilayer. Topologically, residues 49-54 (RIWHMD) are cytoplasmic. Residues 55 to 76 (LIQSAVLYSVMTLVSTYLVAFA) traverse the membrane as a helical segment. The Lumenal portion of the chain corresponds to 77 to 135 (YKNVKFVLKHKVAQKREDAVSKEVTRKLSEADNRKMSRKEKDERILWKKNEVADYEATT). Ser-105 carries the phosphoserine modification. Residues 136 to 157 (FSIFYNNTLFLVVVIVASFFIL) traverse the membrane as a helical segment. Residues 158-163 (KNFNPT) lie on the Cytoplasmic side of the membrane. The chain crosses the membrane as a helical span at residues 164–184 (VNYILSISASSGLIALLSTGS).

It belongs to the TRAP-gamma family. As to quaternary structure, heterotetramer of TRAP-alpha, TRAP-beta, TRAP-delta and TRAP-gamma.

The protein localises to the endoplasmic reticulum membrane. Its function is as follows. TRAP proteins are part of a complex whose function is to bind calcium to the ER membrane and thereby regulate the retention of ER resident proteins. This Pongo abelii (Sumatran orangutan) protein is Translocon-associated protein subunit gamma (SSR3).